An 875-amino-acid chain; its full sequence is Lysine-specific demethylase 7A (875 aa).

Residues 5-56 (PLYCVCRQPYDVNRFMIECDICKDWFHGSCVQVVEHHAADIDVYHCPNCEPI) form a PHD-type zinc finger. The region spanning 197 to 353 (FSDTRMSNLV…MQLRCYEMER (157 aa)) is the JmjC domain. A substrate-binding site is contributed by T246. The Fe cation site is built by H249 and D251. Position 266 (K266) interacts with substrate. H321 provides a ligand contact to Fe cation. 3 disordered regions span residues 442–506 (EDDS…SRKL), 629–710 (SQGE…NTDC), and 742–820 (QGNG…ATAK). A compositionally biased stretch (polar residues) spans 448–462 (AVKTQGSAECSLSRS). Positions 478 to 505 (QDHHHHRRRHHHHHHHHHHHHHHHHSRK) are enriched in basic residues. Residues 650-663 (SDSKAGDSAEKCSL) are compositionally biased toward basic and acidic residues. Over residues 688-697 (SHRHSHHKQA) the composition is skewed to basic residues. Low complexity predominate over residues 742-762 (QGNGSSTSSSSDMWDSSEPCS).

It belongs to the JHDM1 histone demethylase family. JHDM1D subfamily. Requires Fe(2+) as cofactor. Predominantly expressed in brain.

It localises to the nucleus. In terms of biological role, histone demethylase required for brain development. Specifically demethylates dimethylated 'Lys-9' and 'Lys-27' (H3K9me2 and H3K27me2, respectively) of histone H3 and monomethylated histone H4 'Lys-20' residue (H4K20Me1), thereby playing a central role in histone code. In Danio rerio (Zebrafish), this protein is Lysine-specific demethylase 7A (kdm7a).